The primary structure comprises 76 residues: cAMP-dependent protein kinase inhibitor alpha (76 aa).

At Thr-2 the chain carries Blocked amino end (Thr). Residues 49–76 form a disordered region; the sequence is KAEGEGDAQRNPSEQTGEAQGEAAKQES.

It belongs to the PKI family.

In terms of biological role, extremely potent competitive inhibitor of cAMP-dependent protein kinase activity, this protein interacts with the catalytic subunit of the enzyme after the cAMP-induced dissociation of its regulatory chains. In Gallus gallus (Chicken), this protein is cAMP-dependent protein kinase inhibitor alpha (PKIA).